The primary structure comprises 1097 residues: DNA-directed RNA polymerase subunit beta (1097 aa).

The tract at residues 1072 to 1097 (QDVNPRRSTPSRPTYESLGVADYDED) is disordered.

The protein belongs to the RNA polymerase beta chain family. As to quaternary structure, in cyanobacteria the RNAP catalytic core is composed of 2 alpha, 1 beta, 1 beta', 1 gamma and 1 omega subunit. When a sigma factor is associated with the core the holoenzyme is formed, which can initiate transcription.

The enzyme catalyses RNA(n) + a ribonucleoside 5'-triphosphate = RNA(n+1) + diphosphate. Its function is as follows. DNA-dependent RNA polymerase catalyzes the transcription of DNA into RNA using the four ribonucleoside triphosphates as substrates. In Parasynechococcus marenigrum (strain WH8102), this protein is DNA-directed RNA polymerase subunit beta.